Consider the following 445-residue polypeptide: Phosphoglucosamine mutase (445 aa).

Ser102 (phosphoserine intermediate) is an active-site residue. Residues Ser102, Asp241, Asp243, and Asp245 each coordinate Mg(2+). Ser102 carries the phosphoserine modification.

The protein belongs to the phosphohexose mutase family. Mg(2+) is required as a cofactor. Post-translationally, activated by phosphorylation.

It catalyses the reaction alpha-D-glucosamine 1-phosphate = D-glucosamine 6-phosphate. In terms of biological role, catalyzes the conversion of glucosamine-6-phosphate to glucosamine-1-phosphate. The polypeptide is Phosphoglucosamine mutase (Klebsiella pneumoniae (strain 342)).